Reading from the N-terminus, the 167-residue chain is Probable host range protein 2 (167 aa).

It belongs to the poxviridae C7 protein family.

Plays a role for multiplication of the virus in different cell types. This is Probable host range protein 2 from Yaba monkey tumor virus (strain VR587) (YMTV).